We begin with the raw amino-acid sequence, 278 residues long: Pre-hexon-linking protein VIII (278 aa).

The propeptide occupies 114 to 199 (SPSLLSGGAS…ILRYRRLGQQ (86 aa)).

Belongs to the adenoviridae hexon-linking protein family. Interacts with the peripentonal hexons as well as the hexons in the facets. Part of a complex composed of the core-capsid bridging protein, the endosome lysis protein VI and the hexon-linking protein VIII; these interactions bridge the virus core to the capsid. Cleaved by the viral protease during virion maturation. May cause the middle segment to be shed from the capsid.

It is found in the virion. It localises to the host nucleus. Structural component of the virion that acts as a cement protein on the capsid interior and which glue the peripentonal hexons and group-of-nine hexons together. This chain is Pre-hexon-linking protein VIII, found in Pantherophis guttatus (Corn snake).